A 234-amino-acid polypeptide reads, in one-letter code: HTH-type transcriptional repressor FabR (234 aa).

One can recognise an HTH tetR-type domain in the interval K29 to L89. A DNA-binding region (H-T-H motif) is located at residues S52–F71.

Homodimer.

The protein resides in the cytoplasm. Its activity is regulated as follows. Has been suggested to require either an unsaturated acyl carrier protein or unsaturated acyl-CoA (but not their saturated equivalents) for DNA-binding. Another group suggests that unsaturated thioesters are not essential but act instead to enhance DNA-binding. In terms of biological role, binds the promoter region of at least fabA and fabB, but probably not yqfA. Represses the transcription of fabA and fabB, involved in unsaturated fatty acid (UFA) biosynthesis. By controlling UFA production, FabR directly influences the physical properties of the membrane bilayer. The polypeptide is HTH-type transcriptional repressor FabR (Escherichia coli (strain K12)).